Consider the following 477-residue polypeptide: Aspartyl/glutamyl-tRNA(Asn/Gln) amidotransferase subunit B (477 aa).

The protein belongs to the GatB/GatE family. GatB subfamily. As to quaternary structure, heterotrimer of A, B and C subunits.

It catalyses the reaction L-glutamyl-tRNA(Gln) + L-glutamine + ATP + H2O = L-glutaminyl-tRNA(Gln) + L-glutamate + ADP + phosphate + H(+). The catalysed reaction is L-aspartyl-tRNA(Asn) + L-glutamine + ATP + H2O = L-asparaginyl-tRNA(Asn) + L-glutamate + ADP + phosphate + 2 H(+). Functionally, allows the formation of correctly charged Asn-tRNA(Asn) or Gln-tRNA(Gln) through the transamidation of misacylated Asp-tRNA(Asn) or Glu-tRNA(Gln) in organisms which lack either or both of asparaginyl-tRNA or glutaminyl-tRNA synthetases. The reaction takes place in the presence of glutamine and ATP through an activated phospho-Asp-tRNA(Asn) or phospho-Glu-tRNA(Gln). The protein is Aspartyl/glutamyl-tRNA(Asn/Gln) amidotransferase subunit B of Methylobacillus flagellatus (strain ATCC 51484 / DSM 6875 / VKM B-1610 / KT).